Here is a 167-residue protein sequence, read N- to C-terminus: UPF0114 protein in repA1-repA2 intergenic region (167 aa).

The next 3 membrane-spanning stretches (helical) occupy residues 15-35 (LMFP…LKFF), 53-73 (LVLA…LVMV), and 136-156 (IMLC…MAYI).

It belongs to the UPF0114 family.

It localises to the cell membrane. The protein is UPF0114 protein in repA1-repA2 intergenic region of Buchnera aphidicola subsp. Schizaphis graminum (strain Sg).